Reading from the N-terminus, the 146-residue chain is D-aminoacyl-tRNA deacylase (146 aa).

The short motif at 137 to 138 is the Gly-cisPro motif, important for rejection of L-amino acids element; the sequence is GP.

This sequence belongs to the DTD family. In terms of assembly, homodimer.

Its subcellular location is the cytoplasm. The enzyme catalyses glycyl-tRNA(Ala) + H2O = tRNA(Ala) + glycine + H(+). It catalyses the reaction a D-aminoacyl-tRNA + H2O = a tRNA + a D-alpha-amino acid + H(+). Functionally, an aminoacyl-tRNA editing enzyme that deacylates mischarged D-aminoacyl-tRNAs. Also deacylates mischarged glycyl-tRNA(Ala), protecting cells against glycine mischarging by AlaRS. Acts via tRNA-based rather than protein-based catalysis; rejects L-amino acids rather than detecting D-amino acids in the active site. By recycling D-aminoacyl-tRNA to D-amino acids and free tRNA molecules, this enzyme counteracts the toxicity associated with the formation of D-aminoacyl-tRNA entities in vivo and helps enforce protein L-homochirality. In Psychrobacter sp. (strain PRwf-1), this protein is D-aminoacyl-tRNA deacylase.